A 382-amino-acid polypeptide reads, in one-letter code: Succinyl-diaminopimelate desuccinylase (382 aa).

His73 lines the Zn(2+) pocket. Asp75 is a catalytic residue. Asp106 lines the Zn(2+) pocket. Glu140 (proton acceptor) is an active-site residue. Zn(2+) contacts are provided by Glu141, Glu169, and His355.

Belongs to the peptidase M20A family. DapE subfamily. As to quaternary structure, homodimer. Requires Zn(2+) as cofactor. Co(2+) is required as a cofactor.

The enzyme catalyses N-succinyl-(2S,6S)-2,6-diaminopimelate + H2O = (2S,6S)-2,6-diaminopimelate + succinate. Its pathway is amino-acid biosynthesis; L-lysine biosynthesis via DAP pathway; LL-2,6-diaminopimelate from (S)-tetrahydrodipicolinate (succinylase route): step 3/3. Catalyzes the hydrolysis of N-succinyl-L,L-diaminopimelic acid (SDAP), forming succinate and LL-2,6-diaminopimelate (DAP), an intermediate involved in the bacterial biosynthesis of lysine and meso-diaminopimelic acid, an essential component of bacterial cell walls. The sequence is that of Succinyl-diaminopimelate desuccinylase from Saccharophagus degradans (strain 2-40 / ATCC 43961 / DSM 17024).